Reading from the N-terminus, the 297-residue chain is ATP phosphoribosyltransferase (297 aa).

Met1 carries the N-acetylmethionine modification.

It belongs to the ATP phosphoribosyltransferase family.

It localises to the cytoplasm. It catalyses the reaction 1-(5-phospho-beta-D-ribosyl)-ATP + diphosphate = 5-phospho-alpha-D-ribose 1-diphosphate + ATP. It participates in amino-acid biosynthesis; L-histidine biosynthesis; L-histidine from 5-phospho-alpha-D-ribose 1-diphosphate: step 1/9. Its function is as follows. Catalyzes the condensation of ATP and 5-phosphoribose 1-diphosphate to form N'-(5'-phosphoribosyl)-ATP (PR-ATP). Has a crucial role in the pathway because the rate of histidine biosynthesis seems to be controlled primarily by regulation of the enzymatic activity. The polypeptide is ATP phosphoribosyltransferase (HIS1) (Saccharomyces cerevisiae (strain ATCC 204508 / S288c) (Baker's yeast)).